The following is a 127-amino-acid chain: S-adenosylmethionine decarboxylase proenzyme 2 (127 aa).

Residue Ser63 is the Schiff-base intermediate with substrate; via pyruvic acid of the active site. Ser63 is modified (pyruvic acid (Ser); by autocatalysis). The active-site Proton acceptor; for processing activity is the His68. Cys83 (proton donor; for catalytic activity) is an active-site residue.

This sequence belongs to the prokaryotic AdoMetDC family. Type 1 subfamily. As to quaternary structure, heterotetramer of two alpha and two beta chains arranged as a dimer of alpha/beta heterodimers. Pyruvate is required as a cofactor. Is synthesized initially as an inactive proenzyme. Formation of the active enzyme involves a self-maturation process in which the active site pyruvoyl group is generated from an internal serine residue via an autocatalytic post-translational modification. Two non-identical subunits are generated from the proenzyme in this reaction, and the pyruvate is formed at the N-terminus of the alpha chain, which is derived from the carboxyl end of the proenzyme. The post-translation cleavage follows an unusual pathway, termed non-hydrolytic serinolysis, in which the side chain hydroxyl group of the serine supplies its oxygen atom to form the C-terminus of the beta chain, while the remainder of the serine residue undergoes an oxidative deamination to produce ammonia and the pyruvoyl group blocking the N-terminus of the alpha chain.

It carries out the reaction S-adenosyl-L-methionine + H(+) = S-adenosyl 3-(methylsulfanyl)propylamine + CO2. The protein operates within amine and polyamine biosynthesis; S-adenosylmethioninamine biosynthesis; S-adenosylmethioninamine from S-adenosyl-L-methionine: step 1/1. Its function is as follows. Catalyzes the decarboxylation of S-adenosylmethionine to S-adenosylmethioninamine (dcAdoMet), the propylamine donor required for the synthesis of the polyamines spermine and spermidine from the diamine putrescine. This is S-adenosylmethionine decarboxylase proenzyme 2 from Halalkalibacterium halodurans (strain ATCC BAA-125 / DSM 18197 / FERM 7344 / JCM 9153 / C-125) (Bacillus halodurans).